Here is a 68-residue protein sequence, read N- to C-terminus: MPKLKTRSSAKKRFDVKKSGKVKHGKAFAKHLFTFSKTPKSKRSNRGTGHLRDMDAKKVIKEMFPYGG.

Composition is skewed to basic residues over residues 1–11 and 19–29; these read MPKLKTRSSAK and SGKVKHGKAFA. A disordered region spans residues 1–54; it reads MPKLKTRSSAKKRFDVKKSGKVKHGKAFAKHLFTFSKTPKSKRSNRGTGHLRDM.

The protein belongs to the bacterial ribosomal protein bL35 family.

This is Large ribosomal subunit protein bL35 from Myxococcus xanthus (strain DK1622).